A 60-amino-acid chain; its full sequence is UPF0434 protein YcaR (60 aa).

This sequence belongs to the UPF0434 family.

The chain is UPF0434 protein YcaR from Salmonella agona (strain SL483).